Here is a 103-residue protein sequence, read N- to C-terminus: L-rhamnose-binding lectin ELEL-1 (103 aa).

Residues 13–102 (VCEGSSLTIS…KYLELSYDCS (90 aa)) form the SUEL-type lectin domain. 4 disulfides stabilise this stretch: C14–C45, C23–C101, C56–C88, and C69–C75.

Homodimer; disulfide-linked. In terms of processing, not glycosylated.

Its function is as follows. Rhamnose-binding lectin. Also binds alpha-D-melibiose, alpha-D-lactose, beta-D-lactose, methyl-alpha-D-galactopyranoside, methyl-beta-D--galactopyranoside and D-galactose but not D-arabinose, L-fucose, D-glucose, D-mannose, D-maltose, D-sucrose, N-acetyl-D-galactosamine, N-acetyl-D-glucosamine, N-acetyl-D-mannosamine-D-xylose or by glycoproteins orosomucoid, thyroglobulin, ovomucoid and porcine stomach mucin. Shows cation-independent hemagglutinating activity against rabbit and human erythrocytes. Agglutinates cells of Gram-positive bacterial species S.aureus but not those of Gram-negative E.coli. The chain is L-rhamnose-binding lectin ELEL-1 from Echinometra lucunter (Rock-boring urchin).